The sequence spans 116 residues: Ribosome-binding factor A (116 aa).

The protein belongs to the RbfA family. Monomer. Binds 30S ribosomal subunits, but not 50S ribosomal subunits or 70S ribosomes.

The protein resides in the cytoplasm. In terms of biological role, one of several proteins that assist in the late maturation steps of the functional core of the 30S ribosomal subunit. Associates with free 30S ribosomal subunits (but not with 30S subunits that are part of 70S ribosomes or polysomes). Required for efficient processing of 16S rRNA. May interact with the 5'-terminal helix region of 16S rRNA. In Ureaplasma urealyticum serovar 10 (strain ATCC 33699 / Western), this protein is Ribosome-binding factor A.